The following is a 1882-amino-acid chain: RNA2 polyprotein (1882 aa).

Repeat copies occupy residues 554 to 606 (SWSS…LPSF) and 607 to 659 (SWSS…LPSF). The 2.5 X tandem repeats, Pro-rich stretch occupies residues 554 to 698 (SWSSPLPLFA…VSDEFMDVLP (145 aa)). A 3; truncated and approximate repeat occupies 660–698 (SWSSPLPLFASFKVNRGACFLQVLPARKVVSDEFMDVLP). Polar residues-rich tracts occupy residues 1289-1303 (SSLFTGSVDRTQQGT) and 1838-1847 (PSATLGTNNP). Disordered stretches follow at residues 1289–1320 (SSLFTGSVDRTQQGTGAFEDPGFLPPRNSSVQ) and 1838–1863 (PSATLGTNNPVGRPPENVDTGGPGGQ).

The protein belongs to the nepoviruses RNA2 polyprotein family. Post-translationally, specific enzymatic cleavages in vivo by the P1 encoded 3C-like protease yield mature proteins.

The protein localises to the host cell junction. The protein resides in the host plasmodesma. Its subcellular location is the virion. Its function is as follows. Protein 2A: implicated in RNA2 replication. Could also be required for nematode transmission of the virus. Functionally, transports viral genome to neighboring plant cells directly through plasmosdesmata, without any budding. The movement protein allows efficient cell to cell propagation, by bypassing the host cell wall barrier. Acts by forming a tubular structure at the host plasmodesmata, enlarging it enough to allow free passage of virion capsids. The chain is RNA2 polyprotein from Tomato ringspot virus (isolate raspberry) (ToRSV).